Here is a 424-residue protein sequence, read N- to C-terminus: 5-methylthioadenosine/S-adenosylhomocysteine deaminase (424 aa).

Zn(2+) is bound by residues H60 and H62. Positions 89 and 181 each coordinate substrate. H208 is a binding site for Zn(2+). Residues E211 and D296 each coordinate substrate. D296 provides a ligand contact to Zn(2+).

Belongs to the metallo-dependent hydrolases superfamily. MTA/SAH deaminase family. Zn(2+) serves as cofactor.

The catalysed reaction is S-adenosyl-L-homocysteine + H2O + H(+) = S-inosyl-L-homocysteine + NH4(+). The enzyme catalyses S-methyl-5'-thioadenosine + H2O + H(+) = S-methyl-5'-thioinosine + NH4(+). Catalyzes the deamination of 5-methylthioadenosine and S-adenosyl-L-homocysteine into 5-methylthioinosine and S-inosyl-L-homocysteine, respectively. Is also able to deaminate adenosine. The protein is 5-methylthioadenosine/S-adenosylhomocysteine deaminase of Thermococcus sibiricus (strain DSM 12597 / MM 739).